We begin with the raw amino-acid sequence, 159 residues long: Dynein 18 kDa light chain, flagellar outer arm (159 aa).

EF-hand domains follow at residues 18-53 (EEMD…LGQN), 54-89 (PTEE…NKQM), and 129-159 (ELTV…ALLS). Positions 31, 33, 35, 37, 42, 67, 69, 71, 73, and 78 each coordinate Ca(2+).

In terms of assembly, consists of at least 3 heavy chains (alpha, beta and gamma), 2 intermediate chains and 8 light chains.

It localises to the cell projection. It is found in the cilium. The protein localises to the flagellum. In terms of biological role, may be involved in the calcium-mediated regulation of dynein motor function. Binds 1 mole of calcium. This Chlamydomonas reinhardtii (Chlamydomonas smithii) protein is Dynein 18 kDa light chain, flagellar outer arm.